Reading from the N-terminus, the 396-residue chain is Cell adhesion molecule 3 (396 aa).

A signal peptide spans 1–22 (MGAPSALPLLLLLACSWAPGGA). In terms of domain architecture, Ig-like V-type spans 23–124 (NLSQDDSQPW…VRTAKSLVTV (102 aa)). At 23–328 (NLSQDDSQPW…PVPSSSSTYH (306 aa)) the chain is on the extracellular side. Cystine bridges form between Cys48–Cys108, Cys150–Cys207, and Cys252–Cys297. Ig-like C2-type domains follow at residues 128–226 (PQKP…QRIE) and 231–313 (PTAM…FTLN). The N-linked (GlcNAc...) asparagine glycan is linked to Asn288. A helical membrane pass occupies residues 329–349 (AIIGGIVAFIVFLLLILLIFL). Residues 350–396 (GHYLIRHKGTYLTHEAKGSDDAPDADTAIINAEGGQSGGDDKKEYFI) are Cytoplasmic-facing. Residues 365–396 (AKGSDDAPDADTAIINAEGGQSGGDDKKEYFI) form a disordered region. Residue Ser386 is modified to Phosphoserine.

Belongs to the nectin family. Homodimer. Can form trans-heterodimers with NECTIN3. Interacts with EPB41L1, DLG3, PALS2 and CASK. Mainly expressed in brain, in neuronal cell bodies of cerebellum, cortex, hippocampus, hypothalamus and spinal cord. In spinal cord predominantly expressed in motor neurons. Expressed in axons, presynaptic nerve terminals, glia cell processes.

The protein localises to the cell membrane. It is found in the cell junction. Involved in cell-cell adhesion. Has both calcium-independent homophilic cell-cell adhesion activity and calcium-independent heterophilic cell-cell adhesion activity with IGSF4, NECTIN1 and NECTIN3. Interaction with EPB41L1 may regulate structure or function of cell-cell junctions. This Mus musculus (Mouse) protein is Cell adhesion molecule 3 (Cadm3).